Reading from the N-terminus, the 156-residue chain is Small ribosomal subunit protein uS7 (156 aa).

It belongs to the universal ribosomal protein uS7 family. Part of the 30S ribosomal subunit. Contacts proteins S9 and S11.

One of the primary rRNA binding proteins, it binds directly to 16S rRNA where it nucleates assembly of the head domain of the 30S subunit. Is located at the subunit interface close to the decoding center, probably blocks exit of the E-site tRNA. This chain is Small ribosomal subunit protein uS7, found in Anaeromyxobacter dehalogenans (strain 2CP-C).